Reading from the N-terminus, the 305-residue chain is METKDGFLVINKDKGCTSHDCVKQIRKLLNTKKVGHTGTLDPEVIGILPIAIGSATRFIQYLPQGKTYIGQIKLGIRTNTDDIHGEIINQKSWPKISDEKLDQYLNRFRGIIKQIPPKVSSVHINGERAYKKSFRNEVFELAPREVKIDELTLMKWDQINGILEIKVKCSAGTYIRAIARDLGEILNSEGCLLQLKRISACGFDEQNSIKISDIEKDKKNSKNFIIPTISALNHISSFVLSTEEQINFWQTGRAIRVDINYFQENKSFDYKKPIKVIDKKQILLGIGFLNEEQSNINPKLVLNAK.

The active-site Nucleophile is the Asp-41.

It belongs to the pseudouridine synthase TruB family. Type 1 subfamily.

It carries out the reaction uridine(55) in tRNA = pseudouridine(55) in tRNA. Functionally, responsible for synthesis of pseudouridine from uracil-55 in the psi GC loop of transfer RNAs. This chain is tRNA pseudouridine synthase B, found in Prochlorococcus marinus (strain MIT 9301).